The following is a 224-amino-acid chain: Deoxyribose-phosphate aldolase (224 aa).

Asp94 acts as the Proton donor/acceptor in catalysis. The active-site Schiff-base intermediate with acetaldehyde is the Lys156. The active-site Proton donor/acceptor is Lys184.

It belongs to the DeoC/FbaB aldolase family. DeoC type 1 subfamily.

The protein resides in the cytoplasm. The catalysed reaction is 2-deoxy-D-ribose 5-phosphate = D-glyceraldehyde 3-phosphate + acetaldehyde. The protein operates within carbohydrate degradation; 2-deoxy-D-ribose 1-phosphate degradation; D-glyceraldehyde 3-phosphate and acetaldehyde from 2-deoxy-alpha-D-ribose 1-phosphate: step 2/2. Catalyzes a reversible aldol reaction between acetaldehyde and D-glyceraldehyde 3-phosphate to generate 2-deoxy-D-ribose 5-phosphate. This is Deoxyribose-phosphate aldolase from Methanocella arvoryzae (strain DSM 22066 / NBRC 105507 / MRE50).